The chain runs to 459 residues: tRNA modification GTPase MnmE (459 aa).

3 residues coordinate (6S)-5-formyl-5,6,7,8-tetrahydrofolate: Arg-20, Glu-85, and Arg-124. The TrmE-type G domain maps to 221 to 380; that stretch reads GLSTVIIGRP…LEEAIQSLFY (160 aa). Asn-231 serves as a coordination point for K(+). Residues 231-236, 250-256, and 275-278 contribute to the GTP site; these read NVGKSS, TDIPGTT, and DTAG. Ser-235 lines the Mg(2+) pocket. The K(+) site is built by Thr-250, Ile-252, and Thr-255. Thr-256 is a binding site for Mg(2+). Lys-459 serves as a coordination point for (6S)-5-formyl-5,6,7,8-tetrahydrofolate.

This sequence belongs to the TRAFAC class TrmE-Era-EngA-EngB-Septin-like GTPase superfamily. TrmE GTPase family. As to quaternary structure, homodimer. Heterotetramer of two MnmE and two MnmG subunits. The cofactor is K(+).

It localises to the cytoplasm. In terms of biological role, exhibits a very high intrinsic GTPase hydrolysis rate. Involved in the addition of a carboxymethylaminomethyl (cmnm) group at the wobble position (U34) of certain tRNAs, forming tRNA-cmnm(5)s(2)U34. This is tRNA modification GTPase MnmE from Bacillus velezensis (strain DSM 23117 / BGSC 10A6 / LMG 26770 / FZB42) (Bacillus amyloliquefaciens subsp. plantarum).